A 309-amino-acid polypeptide reads, in one-letter code: Golgi to ER traffic protein 4 homolog (309 aa).

Residues 290–309 (SGGGLASMEVDGPTIEDEMD) are disordered.

Belongs to the GET4 family.

In terms of biological role, may play a role in insertion of tail-anchored proteins into the endoplasmic reticulum membrane. This Dictyostelium discoideum (Social amoeba) protein is Golgi to ER traffic protein 4 homolog.